A 210-amino-acid chain; its full sequence is Large ribosomal subunit protein uL3 (210 aa).

Belongs to the universal ribosomal protein uL3 family. Part of the 50S ribosomal subunit. Forms a cluster with proteins L14 and L19.

Functionally, one of the primary rRNA binding proteins, it binds directly near the 3'-end of the 23S rRNA, where it nucleates assembly of the 50S subunit. In Pseudothermotoga lettingae (strain ATCC BAA-301 / DSM 14385 / NBRC 107922 / TMO) (Thermotoga lettingae), this protein is Large ribosomal subunit protein uL3.